A 305-amino-acid polypeptide reads, in one-letter code: Ribosomal RNA small subunit methyltransferase H (305 aa).

S-adenosyl-L-methionine contacts are provided by residues 37 to 39 (GGH), Asp57, Phe85, Asp101, and His108.

Belongs to the methyltransferase superfamily. RsmH family.

Its subcellular location is the cytoplasm. It catalyses the reaction cytidine(1402) in 16S rRNA + S-adenosyl-L-methionine = N(4)-methylcytidine(1402) in 16S rRNA + S-adenosyl-L-homocysteine + H(+). Functionally, specifically methylates the N4 position of cytidine in position 1402 (C1402) of 16S rRNA. The sequence is that of Ribosomal RNA small subunit methyltransferase H from Parabacteroides distasonis (strain ATCC 8503 / DSM 20701 / CIP 104284 / JCM 5825 / NCTC 11152).